We begin with the raw amino-acid sequence, 144 residues long: Mannitol-specific phosphotransferase enzyme IIA component (144 aa).

The 140-residue stretch at 3–142 folds into the PTS EIIA type-2 domain; it reads ELFSNDNIFL…EEIKQVFEEA (140 aa). Histidine 63 (tele-phosphohistidine intermediate) is an active-site residue. Residue histidine 63 is modified to Phosphohistidine; by HPr.

As to quaternary structure, homodimer or homotrimer. Seems to be a monomer when not phosphorylated.

The protein resides in the cytoplasm. Functionally, the phosphoenolpyruvate-dependent sugar phosphotransferase system (sugar PTS), a major carbohydrate active transport system, catalyzes the phosphorylation of incoming sugar substrates concomitantly with their translocation across the cell membrane. The enzyme II CmtAB PTS system is involved in D-mannitol transport. This Staphylococcus aureus (strain MRSA252) protein is Mannitol-specific phosphotransferase enzyme IIA component (mtlF).